Consider the following 205-residue polypeptide: Holliday junction branch migration complex subunit RuvA (205 aa).

The domain I stretch occupies residues methionine 1–valine 64. The tract at residues alanine 65 to threonine 143 is domain II. The interval proline 144 to glutamate 149 is flexible linker. Residues valine 150–threonine 205 form a domain III region.

The protein belongs to the RuvA family. Homotetramer. Forms an RuvA(8)-RuvB(12)-Holliday junction (HJ) complex. HJ DNA is sandwiched between 2 RuvA tetramers; dsDNA enters through RuvA and exits via RuvB. An RuvB hexamer assembles on each DNA strand where it exits the tetramer. Each RuvB hexamer is contacted by two RuvA subunits (via domain III) on 2 adjacent RuvB subunits; this complex drives branch migration. In the full resolvosome a probable DNA-RuvA(4)-RuvB(12)-RuvC(2) complex forms which resolves the HJ.

It is found in the cytoplasm. Functionally, the RuvA-RuvB-RuvC complex processes Holliday junction (HJ) DNA during genetic recombination and DNA repair, while the RuvA-RuvB complex plays an important role in the rescue of blocked DNA replication forks via replication fork reversal (RFR). RuvA specifically binds to HJ cruciform DNA, conferring on it an open structure. The RuvB hexamer acts as an ATP-dependent pump, pulling dsDNA into and through the RuvAB complex. HJ branch migration allows RuvC to scan DNA until it finds its consensus sequence, where it cleaves and resolves the cruciform DNA. This Bartonella quintana (strain Toulouse) (Rochalimaea quintana) protein is Holliday junction branch migration complex subunit RuvA.